The primary structure comprises 300 residues: Putative S-adenosyl-L-methionine-dependent methyltransferase MAB_4328c (300 aa).

Residues Asp126 and 155-156 each bind S-adenosyl-L-methionine; that span reads DL.

The protein belongs to the UPF0677 family.

Functionally, exhibits S-adenosyl-L-methionine-dependent methyltransferase activity. This is Putative S-adenosyl-L-methionine-dependent methyltransferase MAB_4328c from Mycobacteroides abscessus (strain ATCC 19977 / DSM 44196 / CCUG 20993 / CIP 104536 / JCM 13569 / NCTC 13031 / TMC 1543 / L948) (Mycobacterium abscessus).